The following is a 505-amino-acid chain: Lysine--tRNA ligase (505 aa).

Mg(2+) is bound by residues glutamate 415 and glutamate 422.

The protein belongs to the class-II aminoacyl-tRNA synthetase family. Homodimer. Mg(2+) is required as a cofactor.

The protein localises to the cytoplasm. The catalysed reaction is tRNA(Lys) + L-lysine + ATP = L-lysyl-tRNA(Lys) + AMP + diphosphate. In Yersinia enterocolitica serotype O:8 / biotype 1B (strain NCTC 13174 / 8081), this protein is Lysine--tRNA ligase.